Consider the following 110-residue polypeptide: Large ribosomal subunit protein uL22 (110 aa).

This sequence belongs to the universal ribosomal protein uL22 family. In terms of assembly, part of the 50S ribosomal subunit.

Functionally, this protein binds specifically to 23S rRNA; its binding is stimulated by other ribosomal proteins, e.g. L4, L17, and L20. It is important during the early stages of 50S assembly. It makes multiple contacts with different domains of the 23S rRNA in the assembled 50S subunit and ribosome. The globular domain of the protein is located near the polypeptide exit tunnel on the outside of the subunit, while an extended beta-hairpin is found that lines the wall of the exit tunnel in the center of the 70S ribosome. The chain is Large ribosomal subunit protein uL22 from Syntrophus aciditrophicus (strain SB).